Reading from the N-terminus, the 490-residue chain is ATP synthase subunit beta, chloroplastic (490 aa).

ATP is bound at residue 170–177 (GGAGVGKT).

It belongs to the ATPase alpha/beta chains family. F-type ATPases have 2 components, CF(1) - the catalytic core - and CF(0) - the membrane proton channel. CF(1) has five subunits: alpha(3), beta(3), gamma(1), delta(1), epsilon(1). CF(0) has four main subunits: a(1), b(1), b'(1) and c(9-12).

Its subcellular location is the plastid. The protein resides in the chloroplast thylakoid membrane. It carries out the reaction ATP + H2O + 4 H(+)(in) = ADP + phosphate + 5 H(+)(out). Functionally, produces ATP from ADP in the presence of a proton gradient across the membrane. The catalytic sites are hosted primarily by the beta subunits. This Ipomoea quamoclit (Cypress vine) protein is ATP synthase subunit beta, chloroplastic.